A 488-amino-acid polypeptide reads, in one-letter code: V-type proton ATPase subunit B 1 (488 aa).

The protein belongs to the ATPase alpha/beta chains family. In terms of assembly, V-ATPase is a heteromultimeric enzyme composed of a peripheral catalytic V1 complex (main components: subunits A, B, C, D, E, and F) attached to an integral membrane V0 proton pore complex (main component: the proteolipid protein).

Functionally, non-catalytic subunit of the peripheral V1 complex of vacuolar ATPase. V-ATPase is responsible for acidifying a variety of intracellular compartments in eukaryotic cells. This is V-type proton ATPase subunit B 1 from Hordeum vulgare (Barley).